A 248-amino-acid polypeptide reads, in one-letter code: MTNLLNNWLIINQFGYDLPEPWQLGLQDAAHPVMEEIIFFHDQVMFILIIIITTVLWLIVKALSGKAYHRYLVDGTLLEIIWTIVPAIILILIAFPSLKLLYLMDEVMDPALTIKAIGHQWYWSYEYSDYQTETLEFDSYMVPTSELNKGDFRLLEVDNRLVVPINTHVRVLVTGADVLHSFAVPALAVKMDAIPGRLNQTGFFIKRPGIFYGQCSEICGANHSFMPIVIEAVSLDKYINWVLSGSDE.

The Mitochondrial intermembrane portion of the chain corresponds to 1 to 43 (MTNLLNNWLIINQFGYDLPEPWQLGLQDAAHPVMEEIIFFHDQ). The chain crosses the membrane as a helical span at residues 44 to 65 (VMFILIIIITTVLWLIVKALSG). At 66–79 (KAYHRYLVDGTLLE) the chain is on the mitochondrial matrix side. A helical transmembrane segment spans residues 80-99 (IIWTIVPAIILILIAFPSLK). At 100 to 248 (LLYLMDEVMD…INWVLSGSDE (149 aa)) the chain is on the mitochondrial intermembrane side. 6 residues coordinate Cu cation: histidine 180, cysteine 215, glutamate 217, cysteine 219, histidine 223, and methionine 226. Glutamate 217 contributes to the Mg(2+) binding site.

It belongs to the cytochrome c oxidase subunit 2 family. As to quaternary structure, component of the cytochrome c oxidase (complex IV, CIV), a multisubunit enzyme composed of a catalytic core of 3 subunits and several supernumerary subunits. The complex exists as a monomer or a dimer and forms supercomplexes (SCs) in the inner mitochondrial membrane with ubiquinol-cytochrome c oxidoreductase (cytochrome b-c1 complex, complex III, CIII). The cofactor is Cu cation.

The protein resides in the mitochondrion inner membrane. The enzyme catalyses 4 Fe(II)-[cytochrome c] + O2 + 8 H(+)(in) = 4 Fe(III)-[cytochrome c] + 2 H2O + 4 H(+)(out). In terms of biological role, component of the cytochrome c oxidase, the last enzyme in the mitochondrial electron transport chain which drives oxidative phosphorylation. The respiratory chain contains 3 multisubunit complexes succinate dehydrogenase (complex II, CII), ubiquinol-cytochrome c oxidoreductase (cytochrome b-c1 complex, complex III, CIII) and cytochrome c oxidase (complex IV, CIV), that cooperate to transfer electrons derived from NADH and succinate to molecular oxygen, creating an electrochemical gradient over the inner membrane that drives transmembrane transport and the ATP synthase. Cytochrome c oxidase is the component of the respiratory chain that catalyzes the reduction of oxygen to water. Electrons originating from reduced cytochrome c in the intermembrane space (IMS) are transferred via the dinuclear copper A center (CU(A)) of subunit 2 and heme A of subunit 1 to the active site in subunit 1, a binuclear center (BNC) formed by heme A3 and copper B (CU(B)). The BNC reduces molecular oxygen to 2 water molecules using 4 electrons from cytochrome c in the IMS and 4 protons from the mitochondrial matrix. This chain is Cytochrome c oxidase subunit 2 (COII), found in Metridium senile (Brown sea anemone).